Reading from the N-terminus, the 285-residue chain is Formamidopyrimidine-DNA glycosylase (285 aa).

Pro2 acts as the Schiff-base intermediate with DNA in catalysis. Glu3 serves as the catalytic Proton donor. Lys61 acts as the Proton donor; for beta-elimination activity in catalysis. His102, Arg121, and Lys163 together coordinate DNA. The FPG-type zinc finger occupies 249–283 (NAYGQAGKPCARCGTPIARETFMNRGSHFCNRCQK). Catalysis depends on Arg273, which acts as the Proton donor; for delta-elimination activity.

Belongs to the FPG family. As to quaternary structure, monomer. The cofactor is Zn(2+).

The enzyme catalyses Hydrolysis of DNA containing ring-opened 7-methylguanine residues, releasing 2,6-diamino-4-hydroxy-5-(N-methyl)formamidopyrimidine.. The catalysed reaction is 2'-deoxyribonucleotide-(2'-deoxyribose 5'-phosphate)-2'-deoxyribonucleotide-DNA = a 3'-end 2'-deoxyribonucleotide-(2,3-dehydro-2,3-deoxyribose 5'-phosphate)-DNA + a 5'-end 5'-phospho-2'-deoxyribonucleoside-DNA + H(+). Its function is as follows. Involved in base excision repair of DNA damaged by oxidation or by mutagenic agents. Acts as a DNA glycosylase that recognizes and removes damaged bases. Has a preference for oxidized purines, such as 7,8-dihydro-8-oxoguanine (8-oxoG). Has AP (apurinic/apyrimidinic) lyase activity and introduces nicks in the DNA strand. Cleaves the DNA backbone by beta-delta elimination to generate a single-strand break at the site of the removed base with both 3'- and 5'-phosphates. This Corynebacterium efficiens (strain DSM 44549 / YS-314 / AJ 12310 / JCM 11189 / NBRC 100395) protein is Formamidopyrimidine-DNA glycosylase.